The primary structure comprises 402 residues: Type II NADH:quinone oxidoreductase (402 aa).

FAD-binding positions include 12-16 (GAGYA), 39-40 (NK), and Val-83. The active site involves Glu-172. FAD contacts are provided by residues Asp-302, 319-320 (AQ), and Lys-379.

This sequence belongs to the NADH dehydrogenase family. FAD serves as cofactor.

It is found in the cell membrane. It carries out the reaction a quinone + NADH + H(+) = a quinol + NAD(+). Its function is as follows. Alternative, nonproton pumping NADH:quinone oxidoreductase that delivers electrons to the respiratory chain by oxidation of NADH and reduction of quinones, and contributes to the regeneration of NAD(+). In Staphylococcus haemolyticus (strain JCSC1435), this protein is Type II NADH:quinone oxidoreductase.